Reading from the N-terminus, the 355-residue chain is Putative transport protein PH1000 (355 aa).

Helical transmembrane passes span 34–54 (VTWI…LPFF), 55–75 (SPLF…IKLK), 84–104 (AILL…ILVY), 158–178 (FSVP…YFFL), 212–232 (VWLL…LIFK), 240–260 (ILAG…GWMI), 274–294 (IIAG…LPDF), and 310–330 (VLVL…GLII).

It belongs to the autoinducer-2 exporter (AI-2E) (TC 2.A.86) family.

Its subcellular location is the cell membrane. This is Putative transport protein PH1000 from Pyrococcus horikoshii (strain ATCC 700860 / DSM 12428 / JCM 9974 / NBRC 100139 / OT-3).